A 119-amino-acid chain; its full sequence is Holo-[acyl-carrier-protein] synthase (119 aa).

The Mg(2+) site is built by aspartate 8 and glutamate 58.

Belongs to the P-Pant transferase superfamily. AcpS family. Mg(2+) is required as a cofactor.

It localises to the cytoplasm. It carries out the reaction apo-[ACP] + CoA = holo-[ACP] + adenosine 3',5'-bisphosphate + H(+). In terms of biological role, transfers the 4'-phosphopantetheine moiety from coenzyme A to a Ser of acyl-carrier-protein. The polypeptide is Holo-[acyl-carrier-protein] synthase (Streptococcus thermophilus (strain CNRZ 1066)).